Here is a 364-residue protein sequence, read N- to C-terminus: DNA polymerase IV (364 aa).

The UmuC domain maps to 14–198 (IIHIDMDAFF…LPIEKFHGVG (185 aa)). Mg(2+) is bound by residues D18 and D116. E117 is an active-site residue.

Belongs to the DNA polymerase type-Y family. Monomer. Mg(2+) is required as a cofactor.

It is found in the cytoplasm. It carries out the reaction DNA(n) + a 2'-deoxyribonucleoside 5'-triphosphate = DNA(n+1) + diphosphate. Poorly processive, error-prone DNA polymerase involved in untargeted mutagenesis. Copies undamaged DNA at stalled replication forks, which arise in vivo from mismatched or misaligned primer ends. These misaligned primers can be extended by PolIV. Exhibits no 3'-5' exonuclease (proofreading) activity. May be involved in translesional synthesis, in conjunction with the beta clamp from PolIII. The protein is DNA polymerase IV of Streptococcus pyogenes serotype M2 (strain MGAS10270).